The primary structure comprises 183 residues: Adenine phosphoribosyltransferase (183 aa).

The protein belongs to the purine/pyrimidine phosphoribosyltransferase family. Homodimer.

The protein localises to the cytoplasm. The enzyme catalyses AMP + diphosphate = 5-phospho-alpha-D-ribose 1-diphosphate + adenine. It participates in purine metabolism; AMP biosynthesis via salvage pathway; AMP from adenine: step 1/1. Its function is as follows. Catalyzes a salvage reaction resulting in the formation of AMP, that is energically less costly than de novo synthesis. The chain is Adenine phosphoribosyltransferase from Blochmanniella floridana.